We begin with the raw amino-acid sequence, 580 residues long: Netrin-3 (580 aa).

A signal peptide spans 1 to 27; it reads MPGWPWGLLLTAGTLFAALSPGPPAPA. Residues 36–254 enclose the Laminin N-terminal domain; that stretch reads APRGCVPGLV…AATDLQVGGR (219 aa). The tract at residues 62 to 83 is disordered; that stretch reads PATRACDASDPRRAHSPALLTS. Disulfide bonds link cysteine 92-cysteine 125, cysteine 255-cysteine 264, cysteine 257-cysteine 274, cysteine 276-cysteine 285, cysteine 288-cysteine 308, cysteine 311-cysteine 320, cysteine 313-cysteine 338, cysteine 341-cysteine 350, cysteine 353-cysteine 371, cysteine 374-cysteine 386, cysteine 376-cysteine 393, cysteine 395-cysteine 404, cysteine 407-cysteine 421, cysteine 441-cysteine 514, and cysteine 460-cysteine 577. Asparagine 104 carries N-linked (GlcNAc...) asparagine glycosylation. 3 consecutive Laminin EGF-like domains span residues 255 to 308, 311 to 371, and 374 to 421; these read CKCN…SHAC, CSCN…RRAC, and CDCH…VAPC. Residue asparagine 387 is glycosylated (N-linked (GlcNAc...) asparagine). In terms of domain architecture, NTR spans 441 to 577; sequence CDSHCKPARG…LQRRERRGRC (137 aa). Positions 500-502 match the Cell attachment site; atypical motif; sequence RGS.

In terms of tissue distribution, spinal cord.

Its subcellular location is the secreted. It is found in the extracellular space. The protein resides in the extracellular matrix. In terms of biological role, netrins control guidance of CNS commissural axons and peripheral motor axons. This chain is Netrin-3 (NTN3), found in Homo sapiens (Human).